Consider the following 171-residue polypeptide: Peptide deformylase (171 aa).

Fe cation contacts are provided by Cys91 and His133. The active site involves Glu134. His137 lines the Fe cation pocket.

This sequence belongs to the polypeptide deformylase family. Fe(2+) serves as cofactor.

It carries out the reaction N-terminal N-formyl-L-methionyl-[peptide] + H2O = N-terminal L-methionyl-[peptide] + formate. Functionally, removes the formyl group from the N-terminal Met of newly synthesized proteins. Requires at least a dipeptide for an efficient rate of reaction. N-terminal L-methionine is a prerequisite for activity but the enzyme has broad specificity at other positions. This chain is Peptide deformylase, found in Mannheimia succiniciproducens (strain KCTC 0769BP / MBEL55E).